The chain runs to 290 residues: Phosphonopyruvate hydrolase (290 aa).

Substrate is bound at residue 40 to 44; that stretch reads WGSGF. The Nucleophile role is filled by Asp54. Position 81 (Asp81) interacts with Mg(2+). Residues Arg155, His186, and Arg188 each contribute to the substrate site.

As to quaternary structure, homodimer. Homotetramer. Requires Co(2+) as cofactor. Mg(2+) is required as a cofactor. It depends on Mn(2+) as a cofactor.

It carries out the reaction 3-phosphonopyruvate + H2O = pyruvate + phosphate + H(+). Its activity is regulated as follows. Partially inhibited by EDTA. Activity is restored by Co(2+), and to a lesser extent by Ni(2+) and Mg(2+). Unaffected by Cs(2+) and Ca(2+). Activity is reduced by Mn(2+) and Cu(2+). In terms of biological role, hydrolyzes phosphonopyruvate. Not active towards phosphoenolpyruvate, glycerophosphate, phospho-L-serine or phosphoglycolic acid. The protein is Phosphonopyruvate hydrolase of Variovorax sp. (strain Pal2).